Here is a 1128-residue protein sequence, read N- to C-terminus: MSRSVLQPSQQKLAEKLTILNDRGVGMLTRLYNIKKACGDPKAKPSYLIDKNLESAVKFIVRKFPAVETRNNNQQLAQLQKEKSEILKNLALYYFTFVDVMEFKDHVCELLNTIDVCQVFFDITVNFDLTKNYLDLIITYTTLMILLSRIEERKAIIGLYNYAHEMTHGASDREYPRLGQMIVDYENPLKKMMEEFVPHSKSLSDALISLQMVYPRRNLSADQWRNAQLLSLISAPSTMLNPAQSDTMPCEYLSLDAMEKWIIFGFILCHGILNTDATALNLWKLALQSSSCLSLFRDEVFHIHKAAEDLFVNIRGYNKRINDIRECKEAAVSHAGSMHRERRKFLRSALKELATVLSDQPGLLGPKALFVFMALSFARDEIIWLLRHADNMPKKSADDFIDKHIAELIFYMEELRAHVRKYGPVMQRYYVQYLSGFDAVVLNELVQNLSVCPEDESIIMSSFVNTMTSLSVKQVEDGEVFDFRGMRLDWFRLQAYTSVSKASLGLADHRELGKMMNTIIFHTKMVDSLVEMLVETSDLSIFCFYSRAFEKMFQQCLELPSQSRYSIAFPLLCTHFMSCTHELCPEERHHIGDRSLSLCNMFLDEMAKQARNLITDICTEQCTLSDQLLPKHCAKTISQAVNKKSKKQTGKKGEPEREKPGVESMRKNRLVVTNLDKLHTALSELCFSINYVPNMVVWEHTFTPREYLTSHLEIRFTKSIVGMTMYNQATQEIAKPSELLTSVRAYMTVLQSIENYVQIDITRVFNNVLLQQTQHLDSHGEPTITSLYTNWYLETLLRQVSNGHIAYFPAMKAFVNLPTENELTFNAEEYSDISEMRSLSELLGPYGMKFLSESLMWHISSQVAELKKLVVENVDVLTQMRTSFDKPDQMAALFKRLSSVDSVLKRMTIIGVILSFRSLAQEALRDVLSYHIPFLVSSIEDFKDHIPRETDMKVAMNVYELSSAAGLPCEIDPALVVALSSQKSENISPEEEYKIACLLMVFVAVSLPTLASNVMSQYSPAIEGHCNNIHCLAKAINQIAAALFTIHKGSIEDRLKEFLALASSSLLKIGQETDKTTTRNRESVYLLLDMIVQESPFLTMDLLESCFPYVLLRNAYHAVYKQSVTSSA.

Serine 2 carries the post-translational modification N-acetylserine. The segment at alanine 640–methionine 665 is disordered. Positions lysine 651–methionine 665 are enriched in basic and acidic residues. The helical transmembrane segment at isoleucine 995–methionine 1015 threads the bilayer.

Belongs to the HEM-1/HEM-2 family. Component of the WAVE1 complex composed of ABI2, CYFIP1 or CYFIP2, BRK1, NCKAP1 and WASF1/WAVE1. Within the complex, a heterodimer containing NCKAP1 and CYFIP1 interacts with a heterotrimer formed by WAVE1, ABI2 and BRK1. Component of the WAVE2 complex composed of ABI1, CYFIP1/SRA1, NCKAP1/NAP1 and WASF2/WAVE2. CYFIP2 binds to activated RAC1 which causes the complex to dissociate, releasing activated WASF1. The complex can also be activated by NCK1. Associates preferentially with the first SH3 domain of NCK. Interacts with NYAP1, NYAP2 and MYO16. Interacts with TMEM132D. As to quaternary structure, (Microbial infection) Interacts with human cytomegalovirus protein UL135. In terms of tissue distribution, expressed in all tissues examined except peripheral blood leukocytes, with highest expression in brain, heart, and skeletal muscle. Expressed in cells of various brain regions including Purkinje cells and dentate nucleus of the cerebellum, CA4 region and dentate gyrus of the hippocampus, and in frontal gray and white matter.

The protein localises to the cell membrane. Its subcellular location is the cell projection. The protein resides in the lamellipodium membrane. Part of the WAVE complex that regulates lamellipodia formation. The WAVE complex regulates actin filament reorganization via its interaction with the Arp2/3 complex. Actin remodeling activity is regulated by RAC1. As component of the WAVE1 complex, required for BDNF-NTRK2 endocytic trafficking and signaling from early endosomes. The chain is Nck-associated protein 1 (NCKAP1) from Homo sapiens (Human).